Here is a 692-residue protein sequence, read N- to C-terminus: Centrosomal protein of 83 kDa (692 aa).

2 coiled-coil regions span residues 32 to 625 (RCEH…SLIL) and 656 to 689 (HLQE…ELGS). The residue at position 689 (Ser689) is a Phosphoserine.

This sequence belongs to the CEP83 family. Interacts with CEP164 and IFT20.

The protein localises to the cytoplasm. It localises to the cytoskeleton. It is found in the microtubule organizing center. The protein resides in the centrosome. Its subcellular location is the centriole. Component of the distal appendage region of the centriole involved in the initiation of primary cilium assembly. May collaborate with IFT20 in the trafficking of ciliary membrane proteins from the Golgi complex to the cilium during the initiation of primary cilium assembly. In Mus musculus (Mouse), this protein is Centrosomal protein of 83 kDa (Cep83).